Consider the following 327-residue polypeptide: MLNDFQVFDYEDIQLIPAKCVVKSRAEADTRVKFGNHTFRLPVVPSNMQTIIDESVAEELARGGYFYIMHRFDEEGRKPFVKQMHEKGLIASISVGVKDYEYDFVSSLKEDAPEYITIDIAHGHSDSVIKMIQHIKKELPETFVIAGNVGTPEAVRELENAGADATKVGIGPGKVCITKVKTGFGTGGWQLSALRWCSKVARKPIIADGGIRTHGDIAKSIRFGASMVMIGSLFAGHIESPGETIEIDGDKFKEYYGSASEYQKGAYKNVEGKKILLPAKGHLQDTLTEMEQDLQSSISYAGGRDLHSLTRVDYVIVKNSIWNGDAH.

Cys176 functions as the Thioimidate intermediate in the catalytic mechanism. 205–228 (IIADGGIRTHGDIAKSIRFGASMV) contacts NADP(+).

The protein belongs to the IMPDH/GMPR family. GuaC type 2 subfamily.

The catalysed reaction is IMP + NH4(+) + NADP(+) = GMP + NADPH + 2 H(+). Functionally, catalyzes the irreversible NADPH-dependent deamination of GMP to IMP. It functions in the conversion of nucleobase, nucleoside and nucleotide derivatives of G to A nucleotides, and in maintaining the intracellular balance of A and G nucleotides. The chain is GMP reductase from Streptococcus gordonii (strain Challis / ATCC 35105 / BCRC 15272 / CH1 / DL1 / V288).